The primary structure comprises 356 residues: sn-glycerol-3-phosphate import ATP-binding protein UgpC (356 aa).

The ABC transporter domain maps to 4-235 (LKLQAVTKSW…PASLFVASFI (232 aa)). 37–44 (GPSGCGKS) lines the ATP pocket.

Belongs to the ABC transporter superfamily. sn-glycerol-3-phosphate importer (TC 3.A.1.1.3) family. As to quaternary structure, the complex is composed of two ATP-binding proteins (UgpC), two transmembrane proteins (UgpA and UgpE) and a solute-binding protein (UgpB).

The protein localises to the cell inner membrane. The enzyme catalyses sn-glycerol 3-phosphate(out) + ATP + H2O = sn-glycerol 3-phosphate(in) + ADP + phosphate + H(+). The catalysed reaction is glycerol 2-phosphate(out) + ATP + H2O = glycerol 2-phosphate(in) + ADP + phosphate + H(+). Its activity is regulated as follows. ATPase activity is stimulated when UgpB is bound to G3P. Transport is inhibited in vivo by increasing levels of internal phosphate. However, ATPase activity in proteoliposomes is neither inhibited by phosphate nor by the signal transducing protein PhoU or the phosphodiesterase UgpQ. Activated by gluconate and inhibited by fumarate. In terms of biological role, part of the ABC transporter complex UgpBAEC involved in sn-glycerol-3-phosphate (G3P) import. Responsible for energy coupling to the transport system. Can also transport glycerophosphoryl diesters, which are hydrolyzed to G3P and alcohol during transport. The G3P moiety can be detected in the cytoplasm whereas the corresponding alcohol is usually found in the culture medium. It was proposed by Yang et al that the complex could also transport glycerol-2-phosphate (G2P) in vivo, but it was shown later by Wuttge et al that UgpB does not bind G2P, questioning this transport activity. G2P might be converted in the periplasm to G3P before its transport. The chain is sn-glycerol-3-phosphate import ATP-binding protein UgpC from Escherichia coli (strain K12).